The following is a 434-amino-acid chain: UDP-glucose 6-dehydrogenase (434 aa).

NAD(+) is bound by residues 2 to 19 (NITF…GIIM), valine 11, aspartate 30, lysine 35, threonine 121, and glutamate 152. Residues 148–152 (EFLRE), lysine 204, asparagine 208, 249–253 (FLNAG), and glycine 257 contribute to the substrate site. Residue cysteine 260 is the Nucleophile of the active site. Lysine 263 lines the NAD(+) pocket. Position 321 (lysine 321) interacts with substrate. Arginine 328 contacts NAD(+).

It belongs to the UDP-glucose/GDP-mannose dehydrogenase family.

It catalyses the reaction UDP-alpha-D-glucose + 2 NAD(+) + H2O = UDP-alpha-D-glucuronate + 2 NADH + 3 H(+). Its pathway is nucleotide-sugar biosynthesis; UDP-alpha-D-glucuronate biosynthesis; UDP-alpha-D-glucuronate from UDP-alpha-D-glucose: step 1/1. In Rickettsia typhi (strain ATCC VR-144 / Wilmington), this protein is UDP-glucose 6-dehydrogenase (udg).